We begin with the raw amino-acid sequence, 494 residues long: MEITKLTAIELSKKIKQKELSVEEAVKATFSAIKKREPYYHSYITVNEEEALEQASKIQIAIEAGKFADSPLAGVPIAIKDNICVKGMRTTCASKILEDFIPPYNASVIERLKDAGAIILGKTNMDEFAMGSTTETSYFGATKNPWNIECIPGGSSGGSAAAVAAEEAFIALGTDTGGSIRQPSAFCGVTGIKPTYGTVSRYGLVAYASSLDQIGPIARSVSDCAATLQVISGADDKDSTCVKAASYDYVSALRSDVRGLRIGIPRGYFSEGLDAEVKKHVLEAAAFFKEQGAIVEEFDLEAVDYATPAYYVIASAEASSNLSRYDGVKYGYRTADFDGLQELYKKTRSEGFGEEVKRRMMIGSFVLSSGYYDAYYNKALKVRALIKQSFDRAFERFDIILGPTTPAAARKLGQSLFNPVKMFLGDIYTVSVNLAGLPAISLPCGLSEESSSDKSAGMPIGLQLIGKPFGEKDIIRAAYTLEQTKIYQRPKLID.

Residues Lys80 and Ser155 each act as charge relay system in the active site. Ser179 (acyl-ester intermediate) is an active-site residue.

It belongs to the amidase family. GatA subfamily. In terms of assembly, heterotrimer of A, B and C subunits.

It carries out the reaction L-glutamyl-tRNA(Gln) + L-glutamine + ATP + H2O = L-glutaminyl-tRNA(Gln) + L-glutamate + ADP + phosphate + H(+). In terms of biological role, allows the formation of correctly charged Gln-tRNA(Gln) through the transamidation of misacylated Glu-tRNA(Gln) in organisms which lack glutaminyl-tRNA synthetase. The reaction takes place in the presence of glutamine and ATP through an activated gamma-phospho-Glu-tRNA(Gln). In Lachnoclostridium phytofermentans (strain ATCC 700394 / DSM 18823 / ISDg) (Clostridium phytofermentans), this protein is Glutamyl-tRNA(Gln) amidotransferase subunit A.